Consider the following 344-residue polypeptide: F17a-G fimbrial adhesin (344 aa).

Positions 1-22 (MTNFYKVFLAVFILVCCNISQA) are cleaved as a signal peptide. The tract at residues 23–199 (AVSFIGSTEN…SLNPFTLNDT (177 aa)) is receptor-binding lectin domain. Residues 65–66 (AN), 110–111 (DT), and 139–142 (STQG) contribute to the a carbohydrate site. Cysteine 75 and cysteine 132 are oxidised to a cystine. Residues 200–344 (VTSCRLLTPS…GISTFTFSYQ (145 aa)) form a fimbrillin-binding domain region. Positions 288-308 (LKFGPDSPVKGNENQWQLSTG) are disordered. Residues 299–308 (NENQWQLSTG) are compositionally biased toward polar residues.

Belongs to the fimbrial protein family.

It localises to the fimbrium. In terms of biological role, essential fimbrial adhesion factor that mediates binding to N-acetylglucosamine-containing receptors in the host intestinal microvilli, leading to colonization of the intestinal tissue, and diarrhea or septicemia. Also confers adhesiveness to laminin and basement membranes. In Escherichia coli, this protein is F17a-G fimbrial adhesin (f17aG).